Here is a 356-residue protein sequence, read N- to C-terminus: S-adenosylmethionine:tRNA ribosyltransferase-isomerase (356 aa).

It belongs to the QueA family. Monomer.

It localises to the cytoplasm. It carries out the reaction 7-aminomethyl-7-carbaguanosine(34) in tRNA + S-adenosyl-L-methionine = epoxyqueuosine(34) in tRNA + adenine + L-methionine + 2 H(+). It participates in tRNA modification; tRNA-queuosine biosynthesis. Transfers and isomerizes the ribose moiety from AdoMet to the 7-aminomethyl group of 7-deazaguanine (preQ1-tRNA) to give epoxyqueuosine (oQ-tRNA). This is S-adenosylmethionine:tRNA ribosyltransferase-isomerase from Escherichia coli O81 (strain ED1a).